A 150-amino-acid chain; its full sequence is UPF0178 protein Shewmr4_1560 (150 aa).

The protein belongs to the UPF0178 family.

In Shewanella sp. (strain MR-4), this protein is UPF0178 protein Shewmr4_1560.